Reading from the N-terminus, the 218-residue chain is MNGGGQQGGFFGLLVIIIPVILLIVFFSKKKNSQKTEFGGEGGSRASKKDEVWKTVKQFLQEQNERGKEIIKTFVAKNPNPLHSRKDRQFFNQEVQAYITAHNLSKTAAKRYRHEQLKLKQRELYCIYFITKDAKTSVFDEARIIEAEVYQKPNKTGKGAPERLIRILGLKNFNDEMKWIQPLMDREEKRKEKEEKRKRELAARQLKRQEKKKQKTSK.

The span at M184–A202 shows a compositional bias: basic and acidic residues. The segment at M184–K218 is disordered. Over residues Q205 to K218 the composition is skewed to basic residues.

This is an uncharacterized protein from Mycoplasma pneumoniae (strain ATCC 29342 / M129 / Subtype 1) (Mycoplasmoides pneumoniae).